The sequence spans 327 residues: uncharacterized protein (327 aa).

The N-terminal stretch at M1 to G24 is a signal peptide.

This is an uncharacterized protein from Salmonella typhimurium (strain LT2 / SGSC1412 / ATCC 700720).